A 540-amino-acid polypeptide reads, in one-letter code: Chaperonin GroEL 2/3 (540 aa).

Residues 30–33 (TLGP), Lys51, 87–91 (DGTTT), Gly415, 479–481 (NAA), and Asp495 each bind ATP.

The protein belongs to the chaperonin (HSP60) family. As to quaternary structure, forms a cylinder of 14 subunits composed of two heptameric rings stacked back-to-back. Interacts with the co-chaperonin GroES.

It localises to the cytoplasm. It carries out the reaction ATP + H2O + a folded polypeptide = ADP + phosphate + an unfolded polypeptide.. Together with its co-chaperonin GroES, plays an essential role in assisting protein folding. The GroEL-GroES system forms a nano-cage that allows encapsulation of the non-native substrate proteins and provides a physical environment optimized to promote and accelerate protein folding. The polypeptide is Chaperonin GroEL 2/3 (Paraburkholderia xenovorans (strain LB400)).